The chain runs to 316 residues: Tetrahydromethanopterin S-methyltransferase subunit H (316 aa).

The protein belongs to the MtrH family. The complex is composed of 8 subunits; MtrA, MtrB, MtrC, MtrD, MtrE, MtrF, MtrG and MtrH.

It catalyses the reaction 5-methyl-5,6,7,8-tetrahydromethanopterin + coenzyme M + 2 Na(+)(in) = 5,6,7,8-tetrahydromethanopterin + methyl-coenzyme M + 2 Na(+)(out). It functions in the pathway one-carbon metabolism; methanogenesis from CO(2); methyl-coenzyme M from 5,10-methylene-5,6,7,8-tetrahydromethanopterin: step 2/2. Part of a complex that catalyzes the formation of methyl-coenzyme M and tetrahydromethanopterin from coenzyme M and methyl-tetrahydromethanopterin. This is an energy-conserving, sodium-ion translocating step. MtrH catalyzes the transfer of the methyl group from methyl-tetrahydromethanopterin to the corrinoid prosthetic group of MtrA. The polypeptide is Tetrahydromethanopterin S-methyltransferase subunit H (Methanosarcina barkeri (strain Fusaro / DSM 804)).